An 882-amino-acid polypeptide reads, in one-letter code: DNA mismatch repair protein MutS (882 aa).

ATP is bound at residue 627–634 (GPNMAGKS).

The protein belongs to the DNA mismatch repair MutS family.

In terms of biological role, this protein is involved in the repair of mismatches in DNA. It is possible that it carries out the mismatch recognition step. This protein has a weak ATPase activity. This chain is DNA mismatch repair protein MutS, found in Anaeromyxobacter sp. (strain K).